The chain runs to 119 residues: ATP-dependent Clp protease adapter protein ClpS (119 aa).

It belongs to the ClpS family. In terms of assembly, binds to the N-terminal domain of the chaperone ClpA.

In terms of biological role, involved in the modulation of the specificity of the ClpAP-mediated ATP-dependent protein degradation. This is ATP-dependent Clp protease adapter protein ClpS from Marinobacter nauticus (strain ATCC 700491 / DSM 11845 / VT8) (Marinobacter aquaeolei).